Reading from the N-terminus, the 444-residue chain is Divalent metal cation transporter MntH (444 aa).

Transmembrane regions (helical) follow at residues 39 to 59, 69 to 89, 109 to 128, 146 to 166, 175 to 195, 215 to 235, 264 to 284, 304 to 324, 346 to 366, 372 to 392, and 417 to 437; these read LLFAGPAVIASIAYVDPGNFA, GYTLLWVVAAANLIAMLFQAL, FSRPLVIALWIISEIAAMAT, LPLIIGMVATAMITFALLLFE, LVIGALVATIGLCYLAEMFIA, TALTIATGIVGATVMPHAVYL, VILALALAGMVNMAMVIMAAS, TPLLGAAAAAIFLISLITSGI, IPVWLRRLVTMVPAFIVILAG, ALVISQVILSIALPAPMIALI, and AAAIVLGLNMVLLIQAFGFTI.

Belongs to the NRAMP family.

It is found in the cell inner membrane. Its function is as follows. H(+)-stimulated, divalent metal cation uptake system. This Granulibacter bethesdensis (strain ATCC BAA-1260 / CGDNIH1) protein is Divalent metal cation transporter MntH.